Here is a 394-residue protein sequence, read N- to C-terminus: Elongation factor Tu (394 aa).

In terms of domain architecture, tr-type G spans 10–204 (KPHVNIGTIG…AVDSYIPQPV (195 aa)). The segment at 19-26 (GHVDHGKT) is G1. 19–26 (GHVDHGKT) is a binding site for GTP. Thr-26 is a Mg(2+) binding site. The interval 60-64 (GITIS) is G2. Residues 81 to 84 (DCPG) are G3. Residues 81 to 85 (DCPGH) and 136 to 139 (NKVD) each bind GTP. Residues 136–139 (NKVD) are G4. The tract at residues 174 to 176 (SAL) is G5.

It belongs to the TRAFAC class translation factor GTPase superfamily. Classic translation factor GTPase family. EF-Tu/EF-1A subfamily. Monomer.

Its subcellular location is the cytoplasm. It catalyses the reaction GTP + H2O = GDP + phosphate + H(+). GTP hydrolase that promotes the GTP-dependent binding of aminoacyl-tRNA to the A-site of ribosomes during protein biosynthesis. The sequence is that of Elongation factor Tu from Rickettsia canadensis (strain McKiel).